A 107-amino-acid chain; its full sequence is UPF0145 protein PM1668 (107 aa).

The protein belongs to the UPF0145 family.

This Pasteurella multocida (strain Pm70) protein is UPF0145 protein PM1668.